The following is a 670-amino-acid chain: DUF724 domain-containing protein 1 (670 aa).

Disordered stretches follow at residues 283-315 (HNGPQQKPVKESPSNAIKQKPMCSSSGARPMTP) and 368-445 (ANAE…NNDD). 3 stretches are compositionally biased toward polar residues: residues 294–309 (SPSNAIKQKPMCSSSG), 379–392 (RNQNCLRNDSTQQM), and 426–442 (CNGSESEISNTGKSICN). The DUF724 domain maps to 484-669 (PFAKKLPFWK…LEFQTTVSTP (186 aa)).

In terms of tissue distribution, expressed in stems and flowers.

The protein resides in the nucleus. Functionally, may be involved in the polar growth of plant cells via transportation of RNAs. This chain is DUF724 domain-containing protein 1, found in Arabidopsis thaliana (Mouse-ear cress).